The primary structure comprises 128 residues: Small ribosomal subunit protein eS8 (128 aa).

Belongs to the eukaryotic ribosomal protein eS8 family. As to quaternary structure, part of the 30S ribosomal subunit.

This Methanococcus vannielii (strain ATCC 35089 / DSM 1224 / JCM 13029 / OCM 148 / SB) protein is Small ribosomal subunit protein eS8.